A 186-amino-acid polypeptide reads, in one-letter code: Ribosome maturation factor RimM (186 aa).

The PRC barrel domain maps to 103-174; it reads PEEYHYSDLI…ELQVQPPPGL (72 aa).

It belongs to the RimM family. Binds ribosomal protein uS19.

It is found in the cytoplasm. In terms of biological role, an accessory protein needed during the final step in the assembly of 30S ribosomal subunit, possibly for assembly of the head region. Essential for efficient processing of 16S rRNA. May be needed both before and after RbfA during the maturation of 16S rRNA. It has affinity for free ribosomal 30S subunits but not for 70S ribosomes. This is Ribosome maturation factor RimM from Synechococcus sp. (strain JA-3-3Ab) (Cyanobacteria bacterium Yellowstone A-Prime).